The following is a 131-amino-acid chain: Holo-[acyl-carrier-protein] synthase (131 aa).

Mg(2+) contacts are provided by D6 and E55.

This sequence belongs to the P-Pant transferase superfamily. AcpS family. The cofactor is Mg(2+).

It is found in the cytoplasm. The catalysed reaction is apo-[ACP] + CoA = holo-[ACP] + adenosine 3',5'-bisphosphate + H(+). Its function is as follows. Transfers the 4'-phosphopantetheine moiety from coenzyme A to a Ser of acyl-carrier-protein. This is Holo-[acyl-carrier-protein] synthase from Verminephrobacter eiseniae (strain EF01-2).